A 360-amino-acid chain; its full sequence is Protein RecA (360 aa).

An ATP-binding site is contributed by 64–71 (GHESSGKT). Residues 333–360 (QEQVQPEPKSKQSKSKQASEQATQDELI) are disordered.

It belongs to the RecA family.

The protein localises to the cytoplasm. In terms of biological role, can catalyze the hydrolysis of ATP in the presence of single-stranded DNA, the ATP-dependent uptake of single-stranded DNA by duplex DNA, and the ATP-dependent hybridization of homologous single-stranded DNAs. It interacts with LexA causing its activation and leading to its autocatalytic cleavage. This is Protein RecA from Francisella philomiragia subsp. philomiragia (strain ATCC 25017 / CCUG 19701 / FSC 153 / O#319-036).